A 352-amino-acid polypeptide reads, in one-letter code: Probable tyrosine-protein kinase DDB_G0290471 (352 aa).

The 283-residue stretch at isoleucine 51 to tyrosine 333 folds into the Protein kinase domain. ATP is bound by residues leucine 57–valine 65 and lysine 78. Residue aspartate 175 is the Proton acceptor of the active site.

This sequence belongs to the protein kinase superfamily. TKL Tyr protein kinase family.

The catalysed reaction is L-tyrosyl-[protein] + ATP = O-phospho-L-tyrosyl-[protein] + ADP + H(+). The chain is Probable tyrosine-protein kinase DDB_G0290471 from Dictyostelium discoideum (Social amoeba).